The primary structure comprises 386 residues: Succinate--CoA ligase [ADP-forming] subunit beta (386 aa).

Residues lysine 9 to glutamate 244 enclose the ATP-grasp domain. ATP-binding positions include lysine 46, glycine 53–glycine 55, glutamate 99, serine 102, and glutamate 107. Residues asparagine 199 and aspartate 213 each contribute to the Mg(2+) site. Residues asparagine 264 and glycine 321–methionine 323 contribute to the substrate site.

This sequence belongs to the succinate/malate CoA ligase beta subunit family. In terms of assembly, heterotetramer of two alpha and two beta subunits. It depends on Mg(2+) as a cofactor.

The catalysed reaction is succinate + ATP + CoA = succinyl-CoA + ADP + phosphate. The enzyme catalyses GTP + succinate + CoA = succinyl-CoA + GDP + phosphate. It participates in carbohydrate metabolism; tricarboxylic acid cycle; succinate from succinyl-CoA (ligase route): step 1/1. Succinyl-CoA synthetase functions in the citric acid cycle (TCA), coupling the hydrolysis of succinyl-CoA to the synthesis of either ATP or GTP and thus represents the only step of substrate-level phosphorylation in the TCA. The beta subunit provides nucleotide specificity of the enzyme and binds the substrate succinate, while the binding sites for coenzyme A and phosphate are found in the alpha subunit. This is Succinate--CoA ligase [ADP-forming] subunit beta from Wolbachia pipientis subsp. Culex pipiens (strain wPip).